The chain runs to 267 residues: Hydroxynaphthalene reductase-like protein Arp2 (267 aa).

Positions 25, 45, 71, and 98 each coordinate NADP(+). Active-site proton donor residues include Ser-147 and Ser-148. Residues Tyr-162, Lys-166, Val-195, and Thr-197 each contribute to the NADP(+) site. The active-site Proton acceptor is Tyr-162. Lys-166 (lowers pKa of active site Tyr) is an active-site residue.

It belongs to the short-chain dehydrogenases/reductases (SDR) family.

Its function is as follows. Hydroxynaphthalene reductase-like protein; part of the Pks2 gene cluster that mediates the formation of infectious structures (appressoria), enabling these fungi to kill insects faster. The product of the Pks2 gene cluster is different from the one of Pks1 and has still not been identified. This Metarhizium brunneum (strain ARSEF 3297) protein is Hydroxynaphthalene reductase-like protein Arp2.